Consider the following 314-residue polypeptide: MHAYLHCLSHTPLVGFVDPEQAVLDEVNRVIADARRRIAEFDPELVVLFAPDHYNGFFYDVMPPFCLGIGATAIGDFASAAGDLPVPAELAEACAHAILNSGIDLAVSYNMQVDHGFAQPLEFLLGGLDRVPVLPVFINGVAAPLPGFQRTRLLGEAMGRFLNTLNKRVLILGSGGLSHQPPVPELAKADAHLRDRLLGGGKQLPPDERERRQQRVISAARRFTEDPHSLHPLNPVWDNRFMSLLEQGRLSELDAIGNDELSAMAGKSTHEIKTWVAAFAALSAFGRWRSEGRYYRPIPEWIAGFGSLSATTEI.

The Proton donor role is filled by H115. H179 (proton acceptor) is an active-site residue.

The protein belongs to the LigB/MhpB extradiol dioxygenase family. Homotetramer. Fe(2+) serves as cofactor.

It carries out the reaction 3-(2,3-dihydroxyphenyl)propanoate + O2 = (2Z,4E)-2-hydroxy-6-oxonona-2,4-dienedioate + H(+). The catalysed reaction is (2E)-3-(2,3-dihydroxyphenyl)prop-2-enoate + O2 = (2Z,4E,7E)-2-hydroxy-6-oxonona-2,4,7-trienedioate + H(+). It participates in aromatic compound metabolism; 3-phenylpropanoate degradation. In terms of biological role, catalyzes the non-heme iron(II)-dependent oxidative cleavage of 2,3-dihydroxyphenylpropionic acid and 2,3-dihydroxicinnamic acid into 2-hydroxy-6-ketononadienedioate and 2-hydroxy-6-ketononatrienedioate, respectively. The protein is 2,3-dihydroxyphenylpropionate/2,3-dihydroxicinnamic acid 1,2-dioxygenase of Klebsiella pneumoniae subsp. pneumoniae (strain ATCC 700721 / MGH 78578).